Here is a 1342-residue protein sequence, read N- to C-terminus: Subtilisin-like protease 2 (1342 aa).

Positions 1-18 (MLNIIYVVSLILIKFIFY) are cleaved as a signal peptide. Residues 19–687 (KECNNNNNYY…KLYNNKYSFL (669 aa)) constitute a propeptide, inhibition peptide. Disordered stretches follow at residues 85 to 111 (EKKT…ENEI) and 143 to 171 (ADVS…NYKN). 5 N-linked (GlcNAc...) asparagine glycosylation sites follow: Asn165, Asn343, Asn451, Asn455, and Asn493. The segment at 415-474 (KKSKKEKENTQQKGGNNPNVDINILNNNNNNNNNNNNNSNNNSNSMNDEEINYNNNNNKE) is disordered. Low complexity predominate over residues 430 to 474 (NNPNVDINILNNNNNNNNNNNNNSNNNSNSMNDEEINYNNNNNKE). Residues 500-531 (IYHNKNDNSYKNKKEGTGKNNDNNDPNNNNNK) are disordered. A compositionally biased stretch (basic and acidic residues) spans 503–516 (NKNDNSYKNKKEGT). Positions 518–531 (KNNDNNDPNNNNNK) are enriched in low complexity. 3 N-linked (GlcNAc...) asparagine glycosylation sites follow: Asn551, Asn642, and Asn729. The Extracellular segment spans residues 688 to 1137 (NKFLNIEPLI…LYNLYEYDSH (450 aa)). Residues 727 to 1020 (TWNLSIIRVF…DSLVNAEGAV (294 aa)) enclose the Peptidase S8 domain. Catalysis depends on charge relay system residues Asp755 and His798. Residues Asn821, Asn857, Asn893, and Asn951 are each glycosylated (N-linked (GlcNAc...) asparagine). Ser961 (charge relay system) is an active-site residue. N-linked (GlcNAc...) asparagine glycans are attached at residues Asn1010 and Asn1106. The helical transmembrane segment at 1138–1158 (YLLASVILFFLALLSIFVGMI) threads the bilayer. At 1159–1342 (YMKSRKHSDK…MNQLDDMFMK (184 aa)) the chain is on the cytoplasmic side.

This sequence belongs to the peptidase S8 family. Proteolytically cleaved at the N-terminus to generate a 74kDa intermediate which is further processed into a 72kDa form. The first maturation cleavage is autocatalytic, occurs in the ER and is necessary for the subsequent SUB2 trafficking to the microneme. The second cleavage may be mediated by PMX/plasmepsin X.

Its subcellular location is the cell membrane. The protein resides in the cytoplasmic vesicle. The protein localises to the secretory vesicle. It localises to the microneme membrane. It catalyses the reaction Hydrolysis of proteins with broad specificity for peptide bonds, and a preference for a large uncharged residue in P1. Hydrolyzes peptide amides.. Activation may be calcium-dependent. Inhibited by the non-covalent interaction with the cleaved propeptide. Its function is as follows. Serine protease which plays an essential role in the shedding of AMA1, MSP1 and MSP7 from the surface of the invading merozoite; this step is essential for productive invasion and the release of the adhesion between the erythrocyte and the merozoite. May cleave TRAMP/PTTRAMP, thereby shedding TRAMP from the merozoite surface during erythrocyte invasion. The polypeptide is Subtilisin-like protease 2 (Plasmodium falciparum).